A 279-amino-acid polypeptide reads, in one-letter code: Protease HtpX homolog (279 aa).

A run of 2 helical transmembrane segments spans residues 4–24 and 34–54; these read IFLFLATNIAVLVVINIVLAV and GSLLAYSAVVGFTGSIISLLM. Histidine 140 lines the Zn(2+) pocket. Residue glutamate 141 is part of the active site. Residue histidine 144 coordinates Zn(2+). A run of 2 helical transmembrane segments spans residues 155 to 175 and 189 to 209; these read LIQGVVNTFVVFLSRIIANLI and FLVSMVFQILFGFLASLIVMW. Glutamate 215 lines the Zn(2+) pocket.

It belongs to the peptidase M48B family. Requires Zn(2+) as cofactor.

The protein resides in the cell inner membrane. The protein is Protease HtpX homolog of Neisseria meningitidis serogroup B (strain ATCC BAA-335 / MC58).